The chain runs to 95 residues: Cell division topological specificity factor (95 aa).

It belongs to the MinE family.

Its function is as follows. Prevents the cell division inhibition by proteins MinC and MinD at internal division sites while permitting inhibition at polar sites. This ensures cell division at the proper site by restricting the formation of a division septum at the midpoint of the long axis of the cell. This is Cell division topological specificity factor from Methylorubrum extorquens (strain PA1) (Methylobacterium extorquens).